The sequence spans 527 residues: Peptidoglycan O-acetyltransferase (527 aa).

11 helical membrane-spanning segments follow: residues 11–31 (VFVL…VGFL), 55–75 (LFFY…SIVF), 96–116 (LILG…TDFF), 131–151 (LHLI…AYLM), 187–207 (HFLD…GPIV), 228–248 (NIAL…VIAD), 280–300 (LYFD…FFNI), 352–372 (LILV…FIIW), 397–417 (MPKI…WVFF), 463–483 (IMYA…SFCL), and 505–525 (LLLS…FLYF). The active site involves H363.

This sequence belongs to the membrane-bound acyltransferase family.

It is found in the cell membrane. Catalyzes the O-acetylation of peptidoglycan (PG), an important mechanism that appears to confer lysozyme resistance and contributes to pathogen persistence in the host. In Helicobacter pylori (strain ATCC 700392 / 26695) (Campylobacter pylori), this protein is Peptidoglycan O-acetyltransferase (patA).